Here is a 447-residue protein sequence, read N- to C-terminus: Signal recognition particle 54 kDa protein (447 aa).

GTP-binding positions include 103–110 (GVQGSGKT), 185–189 (DTAGR), and 245–248 (TKMD).

It belongs to the GTP-binding SRP family. SRP54 subfamily. As to quaternary structure, part of the signal recognition particle protein translocation system, which is composed of SRP and FtsY. Archaeal SRP consists of a 7S RNA molecule of 300 nucleotides and two protein subunits: SRP54 and SRP19.

The protein resides in the cytoplasm. The enzyme catalyses GTP + H2O = GDP + phosphate + H(+). In terms of biological role, involved in targeting and insertion of nascent membrane proteins into the cytoplasmic membrane. Binds to the hydrophobic signal sequence of the ribosome-nascent chain (RNC) as it emerges from the ribosomes. The SRP-RNC complex is then targeted to the cytoplasmic membrane where it interacts with the SRP receptor FtsY. The sequence is that of Signal recognition particle 54 kDa protein from Saccharolobus solfataricus (strain ATCC 35092 / DSM 1617 / JCM 11322 / P2) (Sulfolobus solfataricus).